A 457-amino-acid chain; its full sequence is Siroheme synthase (457 aa).

The precorrin-2 dehydrogenase /sirohydrochlorin ferrochelatase stretch occupies residues 1–204 (MDHLPIFCQL…ADEKAVNATT (204 aa)). NAD(+) is bound by residues 22–23 (DV) and 43–44 (LT). Position 128 is a phosphoserine (S128). Positions 216-457 (GEVVLVGAGP…RDKLNWFSNY (242 aa)) are uroporphyrinogen-III C-methyltransferase. Residue P225 coordinates S-adenosyl-L-methionine. Catalysis depends on D248, which acts as the Proton acceptor. Residue K270 is the Proton donor of the active site. S-adenosyl-L-methionine is bound by residues 301-303 (GGD), I306, 331-332 (TA), M382, and G411.

In the N-terminal section; belongs to the precorrin-2 dehydrogenase / sirohydrochlorin ferrochelatase family. This sequence in the C-terminal section; belongs to the precorrin methyltransferase family.

The enzyme catalyses uroporphyrinogen III + 2 S-adenosyl-L-methionine = precorrin-2 + 2 S-adenosyl-L-homocysteine + H(+). The catalysed reaction is precorrin-2 + NAD(+) = sirohydrochlorin + NADH + 2 H(+). It catalyses the reaction siroheme + 2 H(+) = sirohydrochlorin + Fe(2+). Its pathway is cofactor biosynthesis; adenosylcobalamin biosynthesis; precorrin-2 from uroporphyrinogen III: step 1/1. It participates in cofactor biosynthesis; adenosylcobalamin biosynthesis; sirohydrochlorin from precorrin-2: step 1/1. The protein operates within porphyrin-containing compound metabolism; siroheme biosynthesis; precorrin-2 from uroporphyrinogen III: step 1/1. It functions in the pathway porphyrin-containing compound metabolism; siroheme biosynthesis; siroheme from sirohydrochlorin: step 1/1. Its pathway is porphyrin-containing compound metabolism; siroheme biosynthesis; sirohydrochlorin from precorrin-2: step 1/1. Its function is as follows. Multifunctional enzyme that catalyzes the SAM-dependent methylations of uroporphyrinogen III at position C-2 and C-7 to form precorrin-2 via precorrin-1. Then it catalyzes the NAD-dependent ring dehydrogenation of precorrin-2 to yield sirohydrochlorin. Finally, it catalyzes the ferrochelation of sirohydrochlorin to yield siroheme. The chain is Siroheme synthase from Salmonella choleraesuis (strain SC-B67).